We begin with the raw amino-acid sequence, 230 residues long: Lipoprotein-releasing system ATP-binding protein LolD (230 aa).

In terms of domain architecture, ABC transporter spans 6–230; it reads LQASNLEKEY…GHFILPSETL (225 aa). Residue 42 to 49 coordinates ATP; it reads GSSGSGKS.

The protein belongs to the ABC transporter superfamily. Lipoprotein translocase (TC 3.A.1.125) family. The complex is composed of two ATP-binding proteins (LolD) and two transmembrane proteins (LolC and LolE).

It localises to the cell inner membrane. Its function is as follows. Part of the ABC transporter complex LolCDE involved in the translocation of mature outer membrane-directed lipoproteins, from the inner membrane to the periplasmic chaperone, LolA. Responsible for the formation of the LolA-lipoprotein complex in an ATP-dependent manner. This Hydrogenovibrio crunogenus (strain DSM 25203 / XCL-2) (Thiomicrospira crunogena) protein is Lipoprotein-releasing system ATP-binding protein LolD.